Here is a 168-residue protein sequence, read N- to C-terminus: Peptide deformylase (168 aa).

Positions 92 and 134 each coordinate Fe cation. Glutamate 135 is a catalytic residue. Histidine 138 serves as a coordination point for Fe cation.

It belongs to the polypeptide deformylase family. The cofactor is Fe(2+).

It carries out the reaction N-terminal N-formyl-L-methionyl-[peptide] + H2O = N-terminal L-methionyl-[peptide] + formate. Its function is as follows. Removes the formyl group from the N-terminal Met of newly synthesized proteins. Requires at least a dipeptide for an efficient rate of reaction. N-terminal L-methionine is a prerequisite for activity but the enzyme has broad specificity at other positions. This chain is Peptide deformylase, found in Hahella chejuensis (strain KCTC 2396).